Consider the following 407-residue polypeptide: Betaine--homocysteine S-methyltransferase 1 (407 aa).

A Hcy-binding domain is found at 11–314; the sequence is KGILERLNAG…YHIRAIAEEL (304 aa). An N6-succinyllysine mark is found at lysine 40, lysine 93, and lysine 98. A Zn(2+)-binding site is contributed by cysteine 217. Lysine 232 and lysine 241 each carry N6-succinyllysine. The Zn(2+) site is built by cysteine 299 and cysteine 300. Serine 330 is subject to Phosphoserine. N6-succinyllysine occurs at positions 340 and 377.

In terms of assembly, homotetramer. The cofactor is Zn(2+).

It is found in the cytoplasm. The protein localises to the cytosol. The protein resides in the nucleus. It catalyses the reaction L-homocysteine + glycine betaine = N,N-dimethylglycine + L-methionine. The protein operates within amine and polyamine degradation; betaine degradation; sarcosine from betaine: step 1/2. It participates in amino-acid biosynthesis; L-methionine biosynthesis via de novo pathway; L-methionine from L-homocysteine (BhmT route): step 1/1. In terms of biological role, involved in the regulation of homocysteine metabolism. Converts betaine and homocysteine to dimethylglycine and methionine, respectively. This reaction is also required for the irreversible oxidation of choline. The protein is Betaine--homocysteine S-methyltransferase 1 (Bhmt) of Mus musculus (Mouse).